The following is a 191-amino-acid chain: TATA-box-binding protein (191 aa).

Repeat copies occupy residues 18 to 94 and 108 to 185.

It belongs to the TBP family. Belongs to the TFIID complex together with the TBP-associated factors (TAFs). Binds DNA as monomer.

The protein resides in the nucleus. Functionally, general transcription factor that functions at the core of the DNA-binding multiprotein factor TFIID. Binding of TFIID to the TATA box is the initial transcriptional step of the pre-initiation complex (PIC), playing a role in the activation of eukaryotic genes transcribed by RNA polymerase II. This Acetabularia peniculus (Green alga) protein is TATA-box-binding protein.